A 163-amino-acid chain; its full sequence is Phosphopantetheine adenylyltransferase (163 aa).

Residue Ser-9 participates in substrate binding. Residues 9–10 (SF) and His-17 contribute to the ATP site. Substrate is bound by residues Lys-41, Thr-73, and Arg-87. ATP contacts are provided by residues 88-90 (GLR), Glu-98, and 123-129 (YSYLSSS).

It belongs to the bacterial CoaD family. As to quaternary structure, homohexamer. The cofactor is Mg(2+).

It is found in the cytoplasm. The catalysed reaction is (R)-4'-phosphopantetheine + ATP + H(+) = 3'-dephospho-CoA + diphosphate. The protein operates within cofactor biosynthesis; coenzyme A biosynthesis; CoA from (R)-pantothenate: step 4/5. In terms of biological role, reversibly transfers an adenylyl group from ATP to 4'-phosphopantetheine, yielding dephospho-CoA (dPCoA) and pyrophosphate. This chain is Phosphopantetheine adenylyltransferase, found in Lachnoclostridium phytofermentans (strain ATCC 700394 / DSM 18823 / ISDg) (Clostridium phytofermentans).